The primary structure comprises 604 residues: Prostaglandin G/H synthase 2 (604 aa).

Residues 1-17 form the signal peptide; the sequence is MLFRAVLLCAALGLSQA. In terms of domain architecture, EGF-like spans 18–55; sequence ANPCCSNPCQNRGECMSTGFDQYKCDCTRTGFYGENCT. 4 disulfide bridges follow: cysteine 21-cysteine 32, cysteine 22-cysteine 145, cysteine 26-cysteine 42, and cysteine 44-cysteine 54. Asparagine 53 is a glycosylation site (N-linked (GlcNAc...) asparagine). Arginine 106 is a substrate binding site. An N-linked (GlcNAc...) asparagine glycan is attached at asparagine 130. Histidine 193 functions as the Proton acceptor in the catalytic mechanism. Tyrosine 341 provides a ligand contact to substrate. The active-site For cyclooxygenase activity is the tyrosine 371. Residue histidine 374 participates in heme b binding. The N-linked (GlcNAc...) asparagine glycan is linked to asparagine 396. Cysteine 526 is subject to S-nitrosocysteine. Cysteine 555 and cysteine 561 are joined by a disulfide. Serine 565 carries the post-translational modification O-acetylserine; by SPHK1. N-linked (GlcNAc...) asparagine glycosylation is present at asparagine 580.

It belongs to the prostaglandin G/H synthase family. In terms of assembly, homodimer. It depends on heme b as a cofactor. In terms of processing, S-nitrosylation by NOS2 (iNOS) activates enzyme activity. S-nitrosylation may take place on different Cys residues in addition to Cys-526. Acetylated at Ser-565 by SPHK1. During neuroinflammation, acetylation by SPHK1 promotes neuronal secretion of specialized preresolving mediators (SPMs), especially 15-R-lipoxin A4, which results in an increase of phagocytic microglia. Following colon injury, expressed in the wound bed mesenchyme during the first phase of repair, probably by colonic mesenchymal stem cells (at protein level).

The protein resides in the microsome membrane. It localises to the endoplasmic reticulum membrane. It is found in the nucleus inner membrane. Its subcellular location is the nucleus outer membrane. It catalyses the reaction (5Z,8Z,11Z,14Z)-eicosatetraenoate + AH2 + 2 O2 = prostaglandin H2 + A + H2O. The catalysed reaction is (5Z,8Z,11Z,14Z)-eicosatetraenoate + 2 O2 = prostaglandin G2. The enzyme catalyses prostaglandin G2 + AH2 = prostaglandin H2 + A + H2O. It carries out the reaction (5Z,8Z,11Z,14Z,17Z)-eicosapentaenoate + 2 O2 = prostaglandin G3. It catalyses the reaction prostaglandin G3 + AH2 = prostaglandin H3 + A + H2O. The catalysed reaction is (8Z,11Z,14Z)-eicosatrienoate + 2 O2 = prostaglandin G1. The enzyme catalyses prostaglandin G1 + AH2 = prostaglandin H1 + A + H2O. It carries out the reaction 2-(5Z,8Z,11Z,14Z)-eicosatetraenoyl-sn-glycero-3-phosphoethanolamine + 2 O2 = 2-(prostaglandin G2)-sn-glycero-3-phosphoethanolamine. It catalyses the reaction 2-(prostaglandin G2)-sn-glycero-3-phosphoethanolamine + AH2 = 2-(prostaglandin H2)-sn-glycero-3-phosphoethanolamine + A + H2O. The catalysed reaction is 2-(5Z,8Z,11Z,14Z)-eicosatetraenoyl-sn-glycero-3-phosphocholine + 2 O2 = 2-(prostaglandin G2)-sn-glycero-3-phosphocholine. The enzyme catalyses 2-(prostaglandin G2)-sn-glycero-3-phosphocholine + AH2 = 2-(prostaglandin H2)-sn-glycero-3-phosphocholine + A + H2O. It carries out the reaction (15S)-hydroperoxy-(5Z,8Z,11Z,13E)-eicosatetraenoate + AH2 = (15S)-hydroxy-(5Z,8Z,11Z,13E)-eicosatetraenoate + A + H2O. It catalyses the reaction 2-(5Z,8Z,11Z,14Z)-eicosatetraenoyl-sn-glycero-3-phosphocholine + AH2 + O2 = 2-[(15S)-hydroxy-(5Z,8Z,11Z,13E)-eicosatetraenoyl]-sn-glycero-3-phosphocholine + A + H2O. The catalysed reaction is 2-(5Z,8Z,11Z,14Z)-eicosatetraenoyl-sn-glycero-3-phosphocholine + AH2 + O2 = 2-[(15R)-hydroxy-(5Z,8Z,11Z,13E)-eicosatetraenoyl]-sn-glycero-3-phosphocholine + A + H2O. The enzyme catalyses 2-(5Z,8Z,11Z,14Z)-eicosatetraenoyl-sn-glycero-3-phosphocholine + AH2 + O2 = 2-[(11R)-hydroxy-(5Z,8Z,12E,14Z)-eicosatetraenoyl]-sn-glycero-3-phosphocholine + A + H2O. It carries out the reaction (9Z,12Z)-octadecadienoate + AH2 + O2 = 9-hydroxy-(10E,12Z)-octadecadienoate + A + H2O. It catalyses the reaction (9Z,12Z)-octadecadienoate + AH2 + O2 = 13-hydroxy-(9Z,11E)-octadecadienoate + A + H2O. The catalysed reaction is (5Z,8Z,11Z,14Z)-eicosatetraenoate + AH2 + O2 = (15R)-hydroxy-(5Z,8Z,11Z,13E)-eicosatetraenoate + A + H2O. The enzyme catalyses (5Z,8Z,11Z,14Z)-eicosatetraenoate + AH2 + O2 = (11R)-hydroxy-(5Z,8Z,12E,14Z)-eicosatetraenoate + A + H2O. It carries out the reaction (5Z,8Z,11Z,14Z,17Z)-eicosapentaenoate + AH2 + O2 = (11R)-hydroxy-(5Z,8Z,12E,14Z,17Z)-eicosapentaenoate + A + H2O. It catalyses the reaction (5Z,8Z,11Z,14Z,17Z)-eicosapentaenoate + AH2 + O2 = (18S)-hydroxy-(5Z,8Z,11Z,14Z,16E)-eicosapentaenoate + A + H2O. The catalysed reaction is (5Z,8Z,11Z,14Z,17Z)-eicosapentaenoate + AH2 + O2 = (18R)-hydroxy-(5Z,8Z,11Z,14Z,16E)-eicosapentaenoate + A + H2O. The enzyme catalyses (5Z,8Z,11Z,14Z,17Z)-eicosapentaenoate + AH2 + O2 = (15R)-hydroxy-(5Z,8Z,11Z,13E,17Z)-eicosapentaenoate + A + H2O. It carries out the reaction (5Z,8Z,11Z,14Z,17Z)-eicosapentaenoate + AH2 + O2 = (15S)-hydroxy-(5Z,8Z,11Z,13E,17Z)-eicosapentaenoate + A + H2O. It catalyses the reaction (7Z,10Z,13Z,16Z,19Z)-docosapentaenoate + AH2 + O2 = 13R-hydroxy-(7Z,10Z,14E,16Z,19Z)-docosapentaenoate + A + H2O. The catalysed reaction is (4Z,7Z,10Z,13Z,16Z,19Z)-docosahexaenoate + AH2 + O2 = 13-hydroxy-(4Z,7Z,10Z,14E,16Z,19Z)-docosahexaenoate + A + H2O. The enzyme catalyses (5S)-hydroxy-(6E,8Z,11Z,14Z)-eicosatetraenoate + AH2 + O2 = (5S,15R)-dihydroxy-(6E,8Z,11Z,13E)-eicosatetraenoate + A + H2O. It carries out the reaction (4Z,7Z,10Z,13Z,16Z,19Z)-docosahexaenoate + AH2 + O2 = 17R-hydroxy-(4Z,7Z,10Z,13Z,15E,19Z)-docosahexaenoate + A + H2O. It catalyses the reaction (5S)-hydroxy-(6E,8Z,11Z,14Z)-eicosatetraenoate + AH2 + O2 = (5S,15S)-dihydroxy-(6E,8Z,11Z,13E)-eicosatetraenoate + A + H2O. The catalysed reaction is (5S)-hydroxy-(6E,8Z,11Z,14Z)-eicosatetraenoate + AH2 + O2 = (5S,11R)-dihydroxy-(6E,8Z,12E,14Z)-eicosatetraenoate + A + H2O. The enzyme catalyses 2-(5Z,8Z,11Z,14Z-eicosatetraenoyl)-glycerol + 2 O2 = 2-glyceryl-prostaglandin G2. It carries out the reaction 2-glyceryl-prostaglandin G2 + AH2 = 2-glyceryl-prostaglandin H2 + A + H2O. It catalyses the reaction (5Z,8Z,11Z,14Z)-eicosatetraenoate + O2 = (15R)-hydroperoxy-(5Z,8Z,11Z,13E)-eicosatetraenoate. The catalysed reaction is (5Z,8Z,11Z,14Z)-eicosatetraenoate + O2 = 11R-hydroperoxy-(5Z,8Z,12E,14Z)-eicosatetraenoate. The enzyme catalyses (9Z,12Z)-octadecadienoate + AH2 + O2 = (9R)-hydroxy-(10E,12Z)-octadecadienoate + A + H2O. It carries out the reaction (9Z,12Z)-octadecadienoate + AH2 + O2 = (9S)-hydroxy-(10E,12Z)-octadecadienoate + A + H2O. It catalyses the reaction (9Z,12Z)-octadecadienoate + AH2 + O2 = (13S)-hydroxy-(9Z,11E)-octadecadienoate + A + H2O. The catalysed reaction is (9Z,12Z)-octadecadienoate + AH2 + O2 = (13R)-hydroxy-(9Z,11E)-octadecadienoate + A + H2O. Its pathway is lipid metabolism; prostaglandin biosynthesis. Its activity is regulated as follows. Inhibited by the nonsteroidal anti-inflammatory drugs aspirin, naproxen, diclofenac, meclofenamic acid, indomethacin and their analogs. Dual cyclooxygenase and peroxidase in the biosynthesis pathway of prostanoids, a class of C20 oxylipins mainly derived from arachidonate, with a particular role in the inflammatory response. The cyclooxygenase activity oxygenates arachidonate (AA, C20:4(n-6)) to the hydroperoxy endoperoxide prostaglandin G2 (PGG2), and the peroxidase activity reduces PGG2 to the hydroxy endoperoxide PGH2, the precursor of all 2-series prostaglandins and thromboxanes. This complex transformation is initiated by abstraction of hydrogen at carbon 13 (with S-stereochemistry), followed by insertion of molecular O2 to form the endoperoxide bridge between carbon 9 and 11 that defines prostaglandins. The insertion of a second molecule of O2 (bis-oxygenase activity) yields a hydroperoxy group in PGG2 that is then reduced to PGH2 by two electrons. Similarly catalyzes successive cyclooxygenation and peroxidation of dihomo-gamma-linoleate (DGLA, C20:3(n-6)) and eicosapentaenoate (EPA, C20:5(n-3)) to corresponding PGH1 and PGH3, the precursors of 1- and 3-series prostaglandins. In an alternative pathway of prostanoid biosynthesis, converts 2-arachidonoyl lysophopholipids to prostanoid lysophopholipids, which are then hydrolyzed by intracellular phospholipases to release free prostanoids. Metabolizes 2-arachidonoyl glycerol yielding the glyceryl ester of PGH2, a process that can contribute to pain response. Generates lipid mediators from n-3 and n-6 polyunsaturated fatty acids (PUFAs) via a lipoxygenase-type mechanism. Oxygenates PUFAs to hydroperoxy compounds and then reduces them to corresponding alcohols. Plays a role in the generation of resolution phase interaction products (resolvins) during both sterile and infectious inflammation. Metabolizes docosahexaenoate (DHA, C22:6(n-3)) to 17R-HDHA, a precursor of the D-series resolvins (RvDs). As a component of the biosynthetic pathway of E-series resolvins (RvEs), converts eicosapentaenoate (EPA, C20:5(n-3)) primarily to 18S-HEPE that is further metabolized by ALOX5 and LTA4H to generate 18S-RvE1 and 18S-RvE2. In vascular endothelial cells, converts docosapentaenoate (DPA, C22:5(n-3)) to 13R-HDPA, a precursor for 13-series resolvins (RvTs) shown to activate macrophage phagocytosis during bacterial infection. In activated leukocytes, contributes to oxygenation of hydroxyeicosatetraenoates (HETE) to diHETES (5,15-diHETE and 5,11-diHETE). Can also use linoleate (LA, (9Z,12Z)-octadecadienoate, C18:2(n-6)) as substrate and produce hydroxyoctadecadienoates (HODEs) in a regio- and stereospecific manner, being (9R)-HODE ((9R)-hydroxy-(10E,12Z)-octadecadienoate) and (13S)-HODE ((13S)-hydroxy-(9Z,11E)-octadecadienoate) its major products. During neuroinflammation, plays a role in neuronal secretion of specialized preresolving mediators (SPMs) 15R-lipoxin A4 that regulates phagocytic microglia. The chain is Prostaglandin G/H synthase 2 from Mus musculus (Mouse).